A 2097-amino-acid chain; its full sequence is 1-phosphatidylinositol 3-phosphate 5-kinase (2097 aa).

The interval Met1–Ser44 is disordered. At Ala2 the chain carries N-acetylalanine. A phosphoserine; by autocatalysis mark is found at Ser23 and Ser48. Positions Asn56 to Pro122 are disordered. Positions Glu66–Ser81 are enriched in low complexity. Ser88 carries the phosphoserine modification. Residues Asp158–Leu218 form an FYVE-type zinc finger. Zn(2+) is bound by residues Cys164, Cys167, Cys180, Cys183, Cys188, Cys191, Cys210, and Cys213. Ser299, Ser307, and Ser312 each carry phosphoserine. Ser318 carries the phosphoserine; by PKB/AKT1 or PKB/AKT2 modification. Residue Ser329 is modified to Phosphoserine. One can recognise a DEP domain in the interval His365 to Gln440. The segment covering Thr442 to Glu459 has biased composition (polar residues). The disordered stretch occupies residues Thr442–Asp469. The span at Gly460–Asp469 shows a compositional bias: basic and acidic residues. A Phosphoserine modification is found at Ser475. The interval Gly484 to Ser505 is disordered. The segment covering Leu488–Ser505 has biased composition (polar residues). A chaperonin-like domain region spans residues Met616–Leu868. Disordered regions lie at residues Gly895–Thr928, Ala989–Thr1022, His1171–Gly1194, and Phe1511–Glu1555. Over residues Ser902–Pro912 the composition is skewed to polar residues. Over residues Ala1175–Gly1184 the composition is skewed to polar residues. The span at Asn1185 to Gly1194 shows a compositional bias: basic and acidic residues. A phosphoserine mark is found at Ser1543 and Ser1548. Ser1668 carries the post-translational modification Phosphoserine; by autocatalysis. Positions Glu1697–Met1742 are disordered. Ser1753 bears the Phosphoserine mark. The PIPK domain occupies Ser1757–Phe2083. A disordered region spans residues Gly1781–Lys1800. Positions Glu1841 to Cys2097 are catalytic. A phosphoserine; by autocatalysis mark is found at Ser1968 and Ser2052.

Component of the PI(3,5)P2 regulatory complex/PAS complex, at least composed of PIKFYVE, FIG4 and VAC14. VAC14 nucleates the assembly of the complex and serves as a scaffold by pentamerizing into a star-shaped structure, which can bind a single copy each of PIKFYVE and FIG4 and coordinates their activities. Interacts (via chaperonin-like domain) with RABEPK; the interaction recruits RABEPK to the endosomal membrane. Interacts with SPAG9. Interacts with EGFR. The cofactor is Mn(2+). In terms of processing, phosphorylated in response to insulin at Ser-318 in a protein kinase B (PKB)-dependent manner. Autophosphorylates which down-regulates lipid product formation. Autophosphorylates which inhibits its own phosphatidylinositol 3-phosphate 5-kinase activity, stimulates FIG4 lipid phosphatase activity and down-regulates lipid product formation. Dephosphorylated by FIG4 in the PI(3,5)P2 regulatory complex, at Ser-48, Ser-1668 and Ser-2052. Phosphorylated in response to insulin at Ser-318 in a protein kinase B (PKB)-dependent manner. In terms of tissue distribution, ubiquitous.

It localises to the endosome membrane. Its subcellular location is the early endosome membrane. The protein localises to the cytoplasmic vesicle. It is found in the phagosome membrane. The protein resides in the late endosome membrane. It catalyses the reaction a 1,2-diacyl-sn-glycero-3-phospho-(1D-myo-inositol-3-phosphate) + ATP = a 1,2-diacyl-sn-glycero-3-phospho-(1D-myo-inositol-3,5-bisphosphate) + ADP + H(+). The enzyme catalyses a 1,2-diacyl-sn-glycero-3-phospho-(1D-myo-inositol) + ATP = a 1,2-diacyl-sn-glycero-3-phospho-(1D-myo-inositol-5-phosphate) + ADP + H(+). The catalysed reaction is L-seryl-[protein] + ATP = O-phospho-L-seryl-[protein] + ADP + H(+). Inhibited by apilimod and YM201636. Its function is as follows. Dual specificity kinase implicated in myriad essential cellular processes such as maintenance of endomembrane homeostasis, and endocytic-vacuolar pathway, lysosomal trafficking, nuclear transport, stress- or hormone-induced signaling and cell cycle progression. The PI(3,5)P2 regulatory complex regulates both the synthesis and turnover of phosphatidylinositol 3,5-bisphosphate (PtdIns(3,5)P2). Sole enzyme to catalyze the phosphorylation of phosphatidylinositol 3-phosphate on the fifth hydroxyl of the myo-inositol ring, to form (PtdIns(3,5)P2). Also catalyzes the phosphorylation of phosphatidylinositol on the fifth hydroxyl of the myo-inositol ring, to form phosphatidylinositol 5-phosphate (PtdIns(5)P). Has serine-protein kinase activity and is able to autophosphorylate and transphosphorylate. Autophosphorylation inhibits its own phosphatidylinositol 3-phosphate 5-kinase activity, stimulates FIG4 lipid phosphatase activity and down-regulates lipid product formation. Involved in key endosome operations such as fission and fusion in the course of endosomal cargo transport. Required for the maturation of early into late endosomes, phagosomes and lysosomes. Regulates vacuole maturation and nutrient recovery following engulfment of macromolecules, initiates the redistribution of accumulated lysosomal contents back into the endosome network. Critical regulator of the morphology, degradative activity, and protein turnover of the endolysosomal system in macrophages and platelets. In neutrophils, critical to perform chemotaxis, generate ROS, and undertake phagosome fusion with lysosomes. Plays a key role in the processing and presentation of antigens by major histocompatibility complex class II (MHC class II) mediated by CTSS. Regulates melanosome biogenesis by controlling the delivery of proteins from the endosomal compartment to the melanosome. Essential for systemic glucose homeostasis, mediates insulin-induced signals for endosome/actin remodeling in the course of GLUT4 translocation/glucose uptake activation. Supports microtubule-based endosome-to-trans-Golgi network cargo transport, trhough association with SPAG9 and RABEPK. Mediates EGFR trafficking to the nucleus. This chain is 1-phosphatidylinositol 3-phosphate 5-kinase, found in Mus musculus (Mouse).